The chain runs to 450 residues: Exodeoxyribonuclease 7 large subunit (450 aa).

This sequence belongs to the XseA family. Heterooligomer composed of large and small subunits.

Its subcellular location is the cytoplasm. The catalysed reaction is Exonucleolytic cleavage in either 5'- to 3'- or 3'- to 5'-direction to yield nucleoside 5'-phosphates.. In terms of biological role, bidirectionally degrades single-stranded DNA into large acid-insoluble oligonucleotides, which are then degraded further into small acid-soluble oligonucleotides. In Listeria monocytogenes serotype 4b (strain CLIP80459), this protein is Exodeoxyribonuclease 7 large subunit.